Consider the following 483-residue polypeptide: GTPase Der (483 aa).

EngA-type G domains follow at residues 3 to 167 (FTLA…GEER) and 212 to 387 (LRIA…EIWN). GTP-binding positions include 9-16 (GRPNVGKS), 56-60 (DTAGL), 119-122 (NKAE), 218-225 (GRPNAGKS), 265-269 (DTAGM), and 330-333 (NKWD). Positions 388–472 (RRISTGRLNR…PIRLSLRTSD (85 aa)) constitute a KH-like domain.

It belongs to the TRAFAC class TrmE-Era-EngA-EngB-Septin-like GTPase superfamily. EngA (Der) GTPase family. Associates with the 50S ribosomal subunit.

GTPase that plays an essential role in the late steps of ribosome biogenesis. This Brucella abortus (strain 2308) protein is GTPase Der.